The primary structure comprises 545 residues: Chaperonin GroEL (545 aa).

ATP-binding positions include Thr30–Pro33, Lys51, Asp87–Thr91, Gly415, and Asp496.

It belongs to the chaperonin (HSP60) family. Forms a cylinder of 14 subunits composed of two heptameric rings stacked back-to-back. Interacts with the co-chaperonin GroES.

The protein resides in the cytoplasm. It carries out the reaction ATP + H2O + a folded polypeptide = ADP + phosphate + an unfolded polypeptide.. Its function is as follows. Together with its co-chaperonin GroES, plays an essential role in assisting protein folding. The GroEL-GroES system forms a nano-cage that allows encapsulation of the non-native substrate proteins and provides a physical environment optimized to promote and accelerate protein folding. The sequence is that of Chaperonin GroEL from Rhodobacter capsulatus (Rhodopseudomonas capsulata).